A 556-amino-acid polypeptide reads, in one-letter code: Formate--tetrahydrofolate ligase (556 aa).

Position 65-72 (65-72 (TPAGEGKS)) interacts with ATP.

This sequence belongs to the formate--tetrahydrofolate ligase family.

It carries out the reaction (6S)-5,6,7,8-tetrahydrofolate + formate + ATP = (6R)-10-formyltetrahydrofolate + ADP + phosphate. Its pathway is one-carbon metabolism; tetrahydrofolate interconversion. The protein is Formate--tetrahydrofolate ligase of Clostridium botulinum (strain Alaska E43 / Type E3).